The primary structure comprises 86 residues: Small ribosomal subunit protein uS15c (86 aa).

Belongs to the universal ribosomal protein uS15 family. Part of the 30S ribosomal subunit.

It is found in the plastid. The protein resides in the chloroplast. This chain is Small ribosomal subunit protein uS15c (rps15), found in Cryptomeria japonica (Japanese cedar).